A 125-amino-acid polypeptide reads, in one-letter code: Small ribosomal subunit protein uS12 (125 aa).

Aspartate 89 bears the 3-methylthioaspartic acid mark. Residues 104–125 (LQGVKDRKQSRSKYGSKRPKKA) form a disordered region. Residues 113–125 (SRSKYGSKRPKKA) are compositionally biased toward basic residues.

The protein belongs to the universal ribosomal protein uS12 family. In terms of assembly, part of the 30S ribosomal subunit. Contacts proteins S8 and S17. May interact with IF1 in the 30S initiation complex.

Its function is as follows. With S4 and S5 plays an important role in translational accuracy. Interacts with and stabilizes bases of the 16S rRNA that are involved in tRNA selection in the A site and with the mRNA backbone. Located at the interface of the 30S and 50S subunits, it traverses the body of the 30S subunit contacting proteins on the other side and probably holding the rRNA structure together. The combined cluster of proteins S8, S12 and S17 appears to hold together the shoulder and platform of the 30S subunit. The polypeptide is Small ribosomal subunit protein uS12 (Leptothrix cholodnii (strain ATCC 51168 / LMG 8142 / SP-6) (Leptothrix discophora (strain SP-6))).